Here is a 461-residue protein sequence, read N- to C-terminus: tRNA-2-methylthio-N(6)-dimethylallyladenosine synthase (461 aa).

One can recognise an MTTase N-terminal domain in the interval 25–143 (PTYSIITHGC…LPYLIDRHLS (119 aa)). Residues Cys-34, Cys-70, Cys-104, Cys-179, Cys-183, and Cys-186 each coordinate [4Fe-4S] cluster. The region spanning 165–395 (RDNEYVGYVN…LDVAYPIFYE (231 aa)) is the Radical SAM core domain. Positions 398-461 (KSYLGTIQEV…SFALTGEMVD (64 aa)) constitute a TRAM domain.

Belongs to the methylthiotransferase family. MiaB subfamily. As to quaternary structure, monomer. It depends on [4Fe-4S] cluster as a cofactor.

The protein resides in the cytoplasm. It catalyses the reaction N(6)-dimethylallyladenosine(37) in tRNA + (sulfur carrier)-SH + AH2 + 2 S-adenosyl-L-methionine = 2-methylsulfanyl-N(6)-dimethylallyladenosine(37) in tRNA + (sulfur carrier)-H + 5'-deoxyadenosine + L-methionine + A + S-adenosyl-L-homocysteine + 2 H(+). Its function is as follows. Catalyzes the methylthiolation of N6-(dimethylallyl)adenosine (i(6)A), leading to the formation of 2-methylthio-N6-(dimethylallyl)adenosine (ms(2)i(6)A) at position 37 in tRNAs that read codons beginning with uridine. The protein is tRNA-2-methylthio-N(6)-dimethylallyladenosine synthase of Finegoldia magna (strain ATCC 29328 / DSM 20472 / WAL 2508) (Peptostreptococcus magnus).